Here is a 213-residue protein sequence, read N- to C-terminus: Kynurenine formamidase (213 aa).

A substrate-binding site is contributed by Trp-18. Zn(2+) contacts are provided by His-48, His-52, and Asp-54. Residue His-58 is the Proton donor/acceptor of the active site. Zn(2+) is bound by residues His-160 and Glu-172.

The protein belongs to the Cyclase 1 superfamily. KynB family. In terms of assembly, homodimer. It depends on Zn(2+) as a cofactor.

The enzyme catalyses N-formyl-L-kynurenine + H2O = L-kynurenine + formate + H(+). Its pathway is amino-acid degradation; L-tryptophan degradation via kynurenine pathway; L-kynurenine from L-tryptophan: step 2/2. Functionally, catalyzes the hydrolysis of N-formyl-L-kynurenine to L-kynurenine, the second step in the kynurenine pathway of tryptophan degradation. This is Kynurenine formamidase from Burkholderia cenocepacia (strain HI2424).